The sequence spans 565 residues: Periplasmic trehalase (565 aa).

Positions 1-30 are cleaved as a signal peptide; it reads MKSPAPSRPQKMALIPACIFLCFAALSVQA. Substrate contacts are provided by residues Arg-152, 159–160, Asn-196, 205–207, 277–279, and Gly-310; these read WD, RSQ, and RPE. Catalysis depends on proton donor/acceptor residues Asp-312 and Glu-496. Glu-511 serves as a coordination point for substrate. The disordered stretch occupies residues 538–565; the sequence is PCDNVPATRPTVKSATTQPSTKEAQPTP. A compositionally biased stretch (polar residues) spans 548–565; that stretch reads TVKSATTQPSTKEAQPTP.

It belongs to the glycosyl hydrolase 37 family. In terms of assembly, monomer.

It localises to the periplasm. It carries out the reaction alpha,alpha-trehalose + H2O = alpha-D-glucose + beta-D-glucose. In terms of biological role, provides the cells with the ability to utilize trehalose at high osmolarity by splitting it into glucose molecules that can subsequently be taken up by the phosphotransferase-mediated uptake system. The chain is Periplasmic trehalase from Escherichia coli O8 (strain IAI1).